The sequence spans 180 residues: Small ribosomal subunit protein uS4 (180 aa).

The region spanning Arg103–His165 is the S4 RNA-binding domain.

Belongs to the universal ribosomal protein uS4 family. As to quaternary structure, part of the 30S ribosomal subunit. Contacts protein S5. The interaction surface between S4 and S5 is involved in control of translational fidelity.

Functionally, one of the primary rRNA binding proteins, it binds directly to 16S rRNA where it nucleates assembly of the body of the 30S subunit. Its function is as follows. With S5 and S12 plays an important role in translational accuracy. The chain is Small ribosomal subunit protein uS4 from Thermococcus gammatolerans (strain DSM 15229 / JCM 11827 / EJ3).